Here is a 119-residue protein sequence, read N- to C-terminus: Immunoglobulin heavy variable 3-49 (119 aa).

The first 19 residues, M1–C19, serve as a signal peptide directing secretion. The segment at E20 to S44 is framework-1. Residues E20 to R119 form the Ig-like domain. Residues C41 and C117 are joined by a disulfide bond. Residues G45–A52 form a complementarity-determining-1 region. Positions M53–F69 are framework-2. The complementarity-determining-2 stretch occupies residues I70 to T79. Positions E80–C117 are framework-3. Residues T118–R119 are complementarity-determining-3.

In terms of assembly, immunoglobulins are composed of two identical heavy chains and two identical light chains; disulfide-linked.

It localises to the secreted. The protein resides in the cell membrane. In terms of biological role, v region of the variable domain of immunoglobulin heavy chains that participates in the antigen recognition. Immunoglobulins, also known as antibodies, are membrane-bound or secreted glycoproteins produced by B lymphocytes. In the recognition phase of humoral immunity, the membrane-bound immunoglobulins serve as receptors which, upon binding of a specific antigen, trigger the clonal expansion and differentiation of B lymphocytes into immunoglobulins-secreting plasma cells. Secreted immunoglobulins mediate the effector phase of humoral immunity, which results in the elimination of bound antigens. The antigen binding site is formed by the variable domain of one heavy chain, together with that of its associated light chain. Thus, each immunoglobulin has two antigen binding sites with remarkable affinity for a particular antigen. The variable domains are assembled by a process called V-(D)-J rearrangement and can then be subjected to somatic hypermutations which, after exposure to antigen and selection, allow affinity maturation for a particular antigen. The protein is Immunoglobulin heavy variable 3-49 of Homo sapiens (Human).